The primary structure comprises 564 residues: Tripeptidyl-peptidase 1 (564 aa).

Residues 1-19 (MGLQACLLGLFALILSGKC) form the signal peptide. A propeptide spans 20–195 (SYSPEPDQRR…PEPQVTGTVG (176 aa)) (removed in mature form). Residues cysteine 111 and cysteine 122 are joined by a disulfide bond. A Peptidase S53 domain is found at 199 to 564 (GVTPSVIRKR…PALPKTLLNP (366 aa)). N-linked (GlcNAc...) asparagine glycans are attached at residues asparagine 210 and asparagine 222. Catalysis depends on charge relay system residues glutamate 272 and aspartate 276. Asparagine 286, asparagine 313, and asparagine 443 each carry an N-linked (GlcNAc...) asparagine glycan. Disulfide bonds link cysteine 365–cysteine 527 and cysteine 523–cysteine 538. The Charge relay system role is filled by serine 475. Residues aspartate 518 and valine 519 each contribute to the Ca(2+) site. Ca(2+) is bound by residues glycine 540, glycine 542, and aspartate 544.

Monomer. Interacts with CLN5. Interacts with CLN3. The cofactor is Ca(2+). Post-translationally, activated by autocatalytic proteolytical processing upon acidification. N-glycosylation is required for processing and activity.

It is found in the lysosome. The protein resides in the melanosome. It carries out the reaction Release of an N-terminal tripeptide from a polypeptide, but also has endopeptidase activity.. Lysosomal serine protease with tripeptidyl-peptidase I activity. May act as a non-specific lysosomal peptidase which generates tripeptides from the breakdown products produced by lysosomal proteinases. Requires substrates with an unsubstituted N-terminus. In Pongo abelii (Sumatran orangutan), this protein is Tripeptidyl-peptidase 1 (TPP1).